Consider the following 286-residue polypeptide: Phosphatidylglycerol--prolipoprotein diacylglyceryl transferase (286 aa).

The next 4 membrane-spanning stretches (helical) occupy residues 25–45 (WYALAYIAGIVIGWLYARMLL), 65–85 (FILWVTIGIILGGRTGYVLFY), 103–123 (GGMSFHGGFMGCVAAVVLFGW), and 127–147 (VPILSLGDITCAVGPIGLFLG). Arginine 148 contributes to the a 1,2-diacyl-sn-glycero-3-phospho-(1'-sn-glycerol) binding site. 3 consecutive transmembrane segments (helical) span residues 188–208 (AGLEGIGLFVILALMIRAGAL), 212–232 (GLIIGAFLTFYGLARITGEFF), and 248–268 (MGMLLSIPMVIVGILVMITTW).

It belongs to the Lgt family.

It is found in the cell inner membrane. It catalyses the reaction L-cysteinyl-[prolipoprotein] + a 1,2-diacyl-sn-glycero-3-phospho-(1'-sn-glycerol) = an S-1,2-diacyl-sn-glyceryl-L-cysteinyl-[prolipoprotein] + sn-glycerol 1-phosphate + H(+). It participates in protein modification; lipoprotein biosynthesis (diacylglyceryl transfer). In terms of biological role, catalyzes the transfer of the diacylglyceryl group from phosphatidylglycerol to the sulfhydryl group of the N-terminal cysteine of a prolipoprotein, the first step in the formation of mature lipoproteins. This chain is Phosphatidylglycerol--prolipoprotein diacylglyceryl transferase, found in Rhodopseudomonas palustris (strain ATCC BAA-98 / CGA009).